The chain runs to 476 residues: UDP-N-acetylmuramate--L-alanine ligase (476 aa).

Residue 107–113 coordinates ATP; sequence GTHGKTT.

The protein belongs to the MurCDEF family.

The protein resides in the cytoplasm. It carries out the reaction UDP-N-acetyl-alpha-D-muramate + L-alanine + ATP = UDP-N-acetyl-alpha-D-muramoyl-L-alanine + ADP + phosphate + H(+). It participates in cell wall biogenesis; peptidoglycan biosynthesis. Its function is as follows. Cell wall formation. The protein is UDP-N-acetylmuramate--L-alanine ligase of Roseiflexus castenholzii (strain DSM 13941 / HLO8).